The following is a 178-amino-acid chain: uncharacterized protein (178 aa).

5 helical membrane-spanning segments follow: residues glycine 13–proline 33, methionine 48–isoleucine 68, isoleucine 80–isoleucine 100, isoleucine 115–leucine 135, and tryptophan 155–serine 175.

The protein resides in the cell membrane. This is an uncharacterized protein from Bacillus subtilis (strain 168).